We begin with the raw amino-acid sequence, 577 residues long: Protein downstream neighbor of son homolog (577 aa).

Disordered stretches follow at residues 1–67 and 328–382; these read MAEL…KRRN and FTQP…LEEM. Residues 362 to 375 are compositionally biased toward acidic residues; the sequence is ETDEVSDESDEDES.

Belongs to the DONSON family. Component of the replisome complex.

Its subcellular location is the nucleus. In terms of biological role, replisome component that maintains genome stability by protecting stalled or damaged replication forks. After the induction of replication stress, required for the stabilization of stalled replication forks, the efficient activation of the intra-S-phase and G/2M cell-cycle checkpoints and the maintenance of genome stability. This chain is Protein downstream neighbor of son homolog, found in Xenopus tropicalis (Western clawed frog).